Here is a 115-residue protein sequence, read N- to C-terminus: Large ribosomal subunit protein uL22 (115 aa).

It belongs to the universal ribosomal protein uL22 family. In terms of assembly, part of the 50S ribosomal subunit.

In terms of biological role, this protein binds specifically to 23S rRNA; its binding is stimulated by other ribosomal proteins, e.g. L4, L17, and L20. It is important during the early stages of 50S assembly. It makes multiple contacts with different domains of the 23S rRNA in the assembled 50S subunit and ribosome. Its function is as follows. The globular domain of the protein is located near the polypeptide exit tunnel on the outside of the subunit, while an extended beta-hairpin is found that lines the wall of the exit tunnel in the center of the 70S ribosome. The sequence is that of Large ribosomal subunit protein uL22 from Limosilactobacillus fermentum (strain NBRC 3956 / LMG 18251) (Lactobacillus fermentum).